A 403-amino-acid polypeptide reads, in one-letter code: Large ribosomal subunit protein uL3 (403 aa).

The segment at methionine 1 to proline 37 is disordered. Position 13 is a phosphoserine (serine 13). The segment covering proline 18 to serine 31 has biased composition (basic residues). A Glycyl lysine isopeptide (Lys-Gly) (interchain with G-Cter in SUMO2) cross-link involves residue lysine 39. The residue at position 136 (lysine 136) is an N6-acetyllysine. Glycyl lysine isopeptide (Lys-Gly) (interchain with G-Cter in SUMO2) cross-links involve residues lysine 224 and lysine 226. The residue at position 245 (histidine 245) is a Tele-methylhistidine. N6-acetyllysine; alternate is present on residues lysine 286 and lysine 294. Residue lysine 286 forms a Glycyl lysine isopeptide (Lys-Gly) (interchain with G-Cter in SUMO2); alternate linkage. Residue lysine 294 forms a Glycyl lysine isopeptide (Lys-Gly) (interchain with G-Cter in SUMO1); alternate linkage. Serine 304 is subject to Phosphoserine. An N6-acetyllysine; alternate modification is found at lysine 366. Lysine 366 is covalently cross-linked (Glycyl lysine isopeptide (Lys-Gly) (interchain with G-Cter in SUMO2); alternate). At lysine 373 the chain carries N6-acetyllysine. Glycyl lysine isopeptide (Lys-Gly) (interchain with G-Cter in SUMO2) cross-links involve residues lysine 386, lysine 393, and lysine 399.

The protein belongs to the universal ribosomal protein uL3 family. Component of the large ribosomal subunit. Interacts with DHX33. Constitutively monomethylated at His-245 by METTL18. Methylation at His-245 regulates translation elongation by slowing ribosome traversal on tyrosine codons: slower elongation provides enough time for proper folding of synthesized proteins and prevents cellular aggregation of tyrosine-rich proteins. It is not required for incorporation of RPL3 into ribosomes.

The protein localises to the nucleus. It localises to the nucleolus. The protein resides in the cytoplasm. Functionally, component of the large ribosomal subunit. The ribosome is a large ribonucleoprotein complex responsible for the synthesis of proteins in the cell. This is Large ribosomal subunit protein uL3 (Rpl3) from Rattus norvegicus (Rat).